The primary structure comprises 368 residues: Glycolate oxidase 3 (368 aa).

Met1 carries the post-translational modification N-acetylmethionine. The region spanning 1–359 is the FMN hydroxy acid dehydrogenase domain; the sequence is MEITNVMEYE…SRTHIKTDWD (359 aa). Residue Tyr24 participates in glyoxylate binding. Residues 77-79, Ser106, 127-129, and Thr155 contribute to the FMN site; these read PTA and QLY. Tyr129 is a glyoxylate binding site. Position 164 (Arg164) interacts with glyoxylate. Residues Lys230 and Ser252 each contribute to the FMN site. The glyoxylate site is built by His254 and Arg257. The active-site Proton acceptor is the His254. FMN-binding positions include 285 to 289 and 308 to 309; these read DGGVR and GR.

The protein belongs to the FMN-dependent alpha-hydroxy acid dehydrogenase family. As to quaternary structure, homotetramer. Requires FMN as cofactor.

The protein resides in the peroxisome. It carries out the reaction glycolate + O2 = glyoxylate + H2O2. It participates in photosynthesis; photorespiration; glycine from 2-phosphoglycolate: step 2/3. Catalyzes the oxidation of glycolate to glyoxylate, with a reduction of O2 to H2O2. Is a key enzyme in photorespiration in green plants. This Arabidopsis thaliana (Mouse-ear cress) protein is Glycolate oxidase 3 (GLO5).